The chain runs to 160 residues: CXXC motif containing zinc binding protein (160 aa).

Zn(2+)-binding residues include C33, C36, C67, and C70. A Phosphoserine modification is found at S75.

The protein belongs to the UPF0587 family. In terms of assembly, monomer.

This Bos taurus (Bovine) protein is CXXC motif containing zinc binding protein (CZIB).